Reading from the N-terminus, the 138-residue chain is MNIIDHFEQENISKRTANTKIPEFEAGDTVKVTVKIIDRSIEKDGKEKLTERFQAYEGVVIAKRNRGITSSFLVRKISHGEGVERRFMTYSPIVHSIDVVKYGVVRRAKLYYLRNRSGKSARIKERHIPIAKTKAAKA.

This sequence belongs to the bacterial ribosomal protein bL19 family.

Its function is as follows. This protein is located at the 30S-50S ribosomal subunit interface and may play a role in the structure and function of the aminoacyl-tRNA binding site. The protein is Large ribosomal subunit protein bL19 of Rickettsia massiliae (strain Mtu5).